Here is a 278-residue protein sequence, read N- to C-terminus: HTH-type transcriptional activator RhaS (278 aa).

The 99-residue stretch at 174–272 (NLLLAWLEDH…NWSPRDIRQG (99 aa)) folds into the HTH araC/xylS-type domain. 2 DNA-binding regions (H-T-H motif) span residues 191–212 (DAVA…KQQT) and 239–262 (VTDI…RREF).

Binds DNA as a dimer.

It localises to the cytoplasm. Activates expression of the rhaBAD and rhaT operons. The chain is HTH-type transcriptional activator RhaS from Shigella flexneri serotype 5b (strain 8401).